Consider the following 334-residue polypeptide: Holliday junction branch migration complex subunit RuvB (334 aa).

A large ATPase domain (RuvB-L) region spans residues 1–182 (MDERLVSSEA…FGVMSRLEYY (182 aa)). Residues Leu-21, Arg-22, Gly-63, Lys-66, Thr-67, Thr-68, 129 to 131 (EDF), Arg-172, Tyr-182, and Arg-219 contribute to the ATP site. Residue Thr-67 participates in Mg(2+) binding. The segment at 183 to 253 (TQEELADIVT…ISQNALERLQ (71 aa)) is small ATPAse domain (RuvB-S). The tract at residues 256–334 (RLGLDHIDHK…HFQMEAPRYD (79 aa)) is head domain (RuvB-H). DNA-binding residues include Arg-311 and Arg-316.

It belongs to the RuvB family. As to quaternary structure, homohexamer. Forms an RuvA(8)-RuvB(12)-Holliday junction (HJ) complex. HJ DNA is sandwiched between 2 RuvA tetramers; dsDNA enters through RuvA and exits via RuvB. An RuvB hexamer assembles on each DNA strand where it exits the tetramer. Each RuvB hexamer is contacted by two RuvA subunits (via domain III) on 2 adjacent RuvB subunits; this complex drives branch migration. In the full resolvosome a probable DNA-RuvA(4)-RuvB(12)-RuvC(2) complex forms which resolves the HJ. Homohexamer which interacts with RecU.

It is found in the cytoplasm. The enzyme catalyses ATP + H2O = ADP + phosphate + H(+). Functionally, the RuvA-RuvB-RuvC complex processes Holliday junction (HJ) DNA during genetic recombination and DNA repair, while the RuvA-RuvB complex plays an important role in the rescue of blocked DNA replication forks via replication fork reversal (RFR). RuvA specifically binds to HJ cruciform DNA, conferring on it an open structure. The RuvB hexamer acts as an ATP-dependent pump, pulling dsDNA into and through the RuvAB complex. RuvB forms 2 homohexamers on either side of HJ DNA bound by 1 or 2 RuvA tetramers; 4 subunits per hexamer contact DNA at a time. Coordinated motions by a converter formed by DNA-disengaged RuvB subunits stimulates ATP hydrolysis and nucleotide exchange. Immobilization of the converter enables RuvB to convert the ATP-contained energy into a lever motion, pulling 2 nucleotides of DNA out of the RuvA tetramer per ATP hydrolyzed, thus driving DNA branch migration. The RuvB motors rotate together with the DNA substrate, which together with the progressing nucleotide cycle form the mechanistic basis for DNA recombination by continuous HJ branch migration. Branch migration allows RuvC to scan DNA until it finds its consensus sequence, where it cleaves and resolves cruciform DNA. The polypeptide is Holliday junction branch migration complex subunit RuvB (Bacillus subtilis (strain 168)).